Here is a 255-residue protein sequence, read N- to C-terminus: MAVTDIFARRATLARSVRLLSQFRYERSEPARFYGALAADTAAMVDDLWRAGHGESAAGRTLLDVGGGPGYFAAAFTDAGVRYLGVEPDPGEMHAAGPVVAADTGTFVRASGMALPFADDSVDICLSSNVAEHVPRPWQLGAEMLRVTRPGGLAVLSYTVWLGPFGGHEMGLTHYLGGARAAERYARKHGHPAKNNYGSSLFEVSVADGLAWAASTGAALAAFPRYHPRWAWSLTSVPVLREFLVSNLVLVLQPQ.

Belongs to the methyltransferase superfamily.

This is an uncharacterized protein from Mycolicibacterium paratuberculosis (strain ATCC BAA-968 / K-10) (Mycobacterium paratuberculosis).